The primary structure comprises 949 residues: MILSLLFSLGGPLGWGLLGAWAQASSTSLSDLQSSRTPGVWKAEAEDTGKDPVGRNWCPYPMSKLVTLLALCKTEKFLIHSQQPCPQGAPDCQKVKVMYRMAHKPVYQVKQKVLTSLAWRCCPGYTGPNCEHHDSMAIPEPADPGDSHQEPQDGPVSFKPGHLAAVINEVEVQQEQQEHLLGDLQNDVHRVADSLPGLWKALPGNLTAAVMEANQTGHEFPDRSLEQVLLPHVDTFLQVHFSPIWRSFNQSLHSLTQAIRNLSLDVEANRQAISRVQDSAVARADFQELGAKFEAKVQENTQRVGQLRQDVEDRLHAQHFTLHRSISELQADVDTKLKRLHKAQEAPGTNGSLVLATPGAGARPEPDSLQARLGQLQRNLSELHMTTARREEELQYTLEDMRATLTRHVDEIKELYSESDETFDQISKVERQVEELQVNHTALRELRVILMEKSLIMEENKEEVERQLLELNLTLQHLQGGHADLIKYVKDCNCQKLYLDLDVIREGQRDATRALEETQVSLDERRQLDGSSLQALQNAVDAVSLAVDAHKAEGERARAATSRLRSQVQALDDEVGALKAAAAEARHEVRQLHSAFAALLEDALRHEAVLAALFGEEVLEEMSEQTPGPLPLSYEQIRVALQDAASGLQEQALGWDELAARVTALEQASEPPRPAEHLEPSHDAGREEAATTALAGLARELQSLSNDVKNVGRCCEAEAGAGAASLNASLHGLHNALFATQRSLEQHQRLFHSLFGNFQGLMEANVSLDLGKLQTMLSRKGKKQQKDLEAPRKRDKKEAEPLVDIRVTGPVPGALGAALWEAGSPVAFYASFSEGTAALQTVKFNTTYINIGSSYFPEHGYFRAPERGVYLFAVSVEFGPGPGTGQLVFGGHHRTPVCTTGQGSGSTATVFAMAELQKGERVWFELTQGSITKRSLSGTAFGGFLMFKT.

Positions 1 to 22 (MILSLLFSLGGPLGWGLLGAWA) are cleaved as a signal peptide. One can recognise an EMI domain in the interval 54–132 (GRNWCPYPMS…PGYTGPNCEH (79 aa)). Cystine bridges form between cysteine 58–cysteine 122, cysteine 85–cysteine 92, and cysteine 121–cysteine 130. Serine 63 carries O-linked (Fuc...) serine glycosylation. Threonine 67 carries O-linked (Fuc) threonine glycosylation. O-linked (Fuc) threonine glycosylation occurs at threonine 115. The disordered stretch occupies residues 133 to 157 (HDSMAIPEPADPGDSHQEPQDGPVS). The stretch at 167–187 (INEVEVQQEQQEHLLGDLQND) forms a coiled coil. N-linked (GlcNAc...) asparagine glycosylation is found at asparagine 205, asparagine 214, asparagine 249, asparagine 261, asparagine 350, asparagine 379, asparagine 439, and asparagine 472. 3 coiled-coil regions span residues 292–487 (KFEA…DLIK), 547–596 (VDAH…HSAF), and 688–711 (EAATTALAGLARELQSLSNDVKNV). N-linked (GlcNAc...) asparagine glycans are attached at residues asparagine 727 and asparagine 765. The tract at residues 779 to 801 (RKGKKQQKDLEAPRKRDKKEAEP) is disordered. Over residues 784 to 800 (QQKDLEAPRKRDKKEAE) the composition is skewed to basic and acidic residues. A C1q domain is found at 821–949 (EAGSPVAFYA…AFGGFLMFKT (129 aa)). Asparagine 845 carries an N-linked (GlcNAc...) asparagine glycan.

As to quaternary structure, heteromer of p110, p125, p140 and p200 subunits; disulfide-linked. Interacts with VEGFA. Interacts with CD93; this interaction promotes angiogenesis. Interacts with CD248. Post-translationally, N- and O-glycosylated. O-fucosylated within the EMI domain (at Ser-63, Thr-67 and Thr-115) by FUT10/POFUT3 and FUT11/POFUT4. In terms of processing, processed by matrix metalloproteinases (MMPs) including MMP9 and, to a lesser degree, by MMP2 upon angiogenic stimulation. As to expression, endothelium.

The protein resides in the secreted. It is found in the extracellular space. It localises to the extracellular matrix. Its function is as follows. Extracellular matrix protein that plays significant roles in the vascular system and is required for the maintenance and stability of blood vessel. Affects several essential steps in angiogenesis including endothelial cell proliferation, migration, and tube formation. Positively regulates angiogenesis by acting as a ligand for CD93 receptor. This chain is Multimerin-2 (MMRN2), found in Homo sapiens (Human).